The primary structure comprises 311 residues: Methionyl-tRNA formyltransferase (311 aa).

(6S)-5,6,7,8-tetrahydrofolate is bound at residue 110–113; the sequence is SLLP.

Belongs to the Fmt family.

It catalyses the reaction L-methionyl-tRNA(fMet) + (6R)-10-formyltetrahydrofolate = N-formyl-L-methionyl-tRNA(fMet) + (6S)-5,6,7,8-tetrahydrofolate + H(+). Its function is as follows. Attaches a formyl group to the free amino group of methionyl-tRNA(fMet). The formyl group appears to play a dual role in the initiator identity of N-formylmethionyl-tRNA by promoting its recognition by IF2 and preventing the misappropriation of this tRNA by the elongation apparatus. The sequence is that of Methionyl-tRNA formyltransferase from Streptococcus pyogenes serotype M1.